Here is a 183-residue protein sequence, read N- to C-terminus: dCTP deaminase (183 aa).

Residue 106-111 (KSTYAR) participates in dCTP binding. Glu-132 (proton donor/acceptor) is an active-site residue. Residues Gln-151, Tyr-165, and Gln-175 each coordinate dCTP.

Belongs to the dCTP deaminase family. As to quaternary structure, homotrimer.

The enzyme catalyses dCTP + H2O + H(+) = dUTP + NH4(+). Its pathway is pyrimidine metabolism; dUMP biosynthesis; dUMP from dCTP (dUTP route): step 1/2. Functionally, catalyzes the deamination of dCTP to dUTP. This chain is dCTP deaminase, found in Gluconobacter oxydans (strain 621H) (Gluconobacter suboxydans).